We begin with the raw amino-acid sequence, 235 residues long: Fms-related tyrosine kinase 3 ligand (235 aa).

Positions 1-26 are cleaved as a signal peptide; the sequence is MTVLAPAWSPTTYLLLLLLLSSGLSG. Over 27–184 the chain is Extracellular; that stretch reads TQDCSFQHSP…EATAPTAPQP (158 aa). Disulfide bonds link cysteine 30–cysteine 111, cysteine 70–cysteine 153, and cysteine 119–cysteine 158. N-linked (GlcNAc...) asparagine glycans are attached at residues asparagine 126 and asparagine 149. A helical transmembrane segment spans residues 185-205; that stretch reads PLLLLLLLPVGLLLLAAAWCL. Residues 206-235 lie on the Cytoplasmic side of the membrane; the sequence is HWQRTRRRTPRPGEQVPPVPSPQDLLLVEH. A disordered region spans residues 213–235; the sequence is RTPRPGEQVPPVPSPQDLLLVEH.

Homodimer (isoform 2).

The protein localises to the cell membrane. It is found in the secreted. In terms of biological role, stimulates the proliferation of early hematopoietic cells by activating FLT3. Synergizes well with a number of other colony stimulating factors and interleukins. Required for the development of B cells, and dendritic cells (DCs). The chain is Fms-related tyrosine kinase 3 ligand (FLT3LG) from Homo sapiens (Human).